The following is a 121-amino-acid chain: Small ribosomal subunit protein uS10 (121 aa).

At Ser2 the chain carries N-acetylserine. Residues Lys6, Lys8, Lys21, Lys32, and Lys101 each participate in a glycyl lysine isopeptide (Lys-Gly) (interchain with G-Cter in ubiquitin) cross-link.

It belongs to the universal ribosomal protein uS10 family. As to quaternary structure, component of the small ribosomal subunit (SSU). Mature yeast ribosomes consist of a small (40S) and a large (60S) subunit. The 40S small subunit contains 1 molecule of ribosomal RNA (18S rRNA) and 33 different proteins (encoded by 57 genes). The large 60S subunit contains 3 rRNA molecules (25S, 5.8S and 5S rRNA) and 46 different proteins (encoded by 81 genes). Post-translationally, ubiquitinated at Lys-6 and Lys-8 by HEL2, to activate the ribosome quality control (RQC) pathway in response to stalled ribosomes. In terms of processing, N-terminally acetylated by acetyltransferase NatA. Also partially acetylated by NatC.

It localises to the cytoplasm. Functionally, component of the ribosome, a large ribonucleoprotein complex responsible for the synthesis of proteins in the cell. The small ribosomal subunit (SSU) binds messenger RNAs (mRNAs) and translates the encoded message by selecting cognate aminoacyl-transfer RNA (tRNA) molecules. The large subunit (LSU) contains the ribosomal catalytic site termed the peptidyl transferase center (PTC), which catalyzes the formation of peptide bonds, thereby polymerizing the amino acids delivered by tRNAs into a polypeptide chain. The nascent polypeptides leave the ribosome through a tunnel in the LSU and interact with protein factors that function in enzymatic processing, targeting, and the membrane insertion of nascent chains at the exit of the ribosomal tunnel. The protein is Small ribosomal subunit protein uS10 of Saccharomyces cerevisiae (strain ATCC 204508 / S288c) (Baker's yeast).